The primary structure comprises 454 residues: N-myc 2 proto-oncogene protein (454 aa).

Disordered stretches follow at residues 132-166, 230-269, and 325-374; these read SEKMQHGHEPAATGPATQVPGAGAASPAGRGHSGT, VAAPPGLSSRPPNGGDHKVLSTSGEDALSDEVDEEEDEEE, and PSPY…VRRR. Low complexity predominate over residues 151–161; sequence PGAGAASPAGR. Over residues 256–269 the composition is skewed to acidic residues; sequence ALSDEVDEEEDEEE. A compositionally biased stretch (basic and acidic residues) spans 363–374; it reads RKSDSEDSVRRR. A bHLH domain is found at 371–423; it reads VRRRNHNILERQRRNDLRSSFTTLRDHVPELVKNEKAAKVVILKKACEYVHYL. Residues 423 to 444 form a leucine-zipper region; the sequence is LQAKEHQLLMEKEKLQARQQQL.

As to quaternary structure, efficient DNA binding requires dimerization with another bHLH protein.

The protein localises to the nucleus. This Marmota monax (Woodchuck) protein is N-myc 2 proto-oncogene protein (N-MYC2).